The sequence spans 1677 residues: Zinc finger protein 831 (1677 aa).

Positions 1 to 26 (MEVPEPTCPAPPARDQPAPTPGPPGA) are enriched in pro residues. Residues 1-43 (MEVPEPTCPAPPARDQPAPTPGPPGAPGGQASPHLTLGPVLLP) form a disordered region. 2 C2H2-type zinc fingers span residues 144 to 166 (YLCP…IRSH) and 172 to 196 (FPCA…TQTH). Disordered stretches follow at residues 193 to 250 (TQTH…SPGA), 270 to 398 (GSAF…AGLE), 516 to 557 (WLEP…PSGH), 663 to 931 (EAAG…VLSA), 950 to 1062 (TPLP…TCEA), 1100 to 1119 (NWEL…SGPL), 1137 to 1176 (LTRP…PFPS), 1216 to 1243 (LRDE…GPAQ), 1510 to 1597 (SAES…GQYG), and 1620 to 1677 (LITR…VIEI). Basic and acidic residues-rich tracts occupy residues 216–232 (EGDK…RGES) and 325–341 (KPWD…KCES). The span at 376-385 (EGGPGPGPGV) shows a compositional bias: gly residues. Residues 391-423 (GAREAGLELEKKRLEERIAQLISHNQAVVDDAQ) are a coiled coil. 4 stretches are compositionally biased toward basic and acidic residues: residues 517-526 (LEPREPRDPW), 674-684 (QDRRTPVHEDI), 707-727 (PTKH…RVEE), and 813-834 (SGED…HSWK). Low complexity-rich tracts occupy residues 880-894 (LESS…SVAL) and 905-919 (PLHP…HPSL). Positions 1153–1170 (SSHSGTSRSHSTRSPHST) are enriched in low complexity. Positions 1518–1531 (QTAGRTLTSSSPDS) are enriched in polar residues. Over residues 1649-1662 (RSLEGMRKQTRVEF) the composition is skewed to basic and acidic residues.

The sequence is that of Zinc finger protein 831 (ZNF831) from Homo sapiens (Human).